The sequence spans 254 residues: Thiazole synthase (254 aa).

K95 serves as the catalytic Schiff-base intermediate with DXP. Residues G156, A182–G183, and N204–T205 contribute to the 1-deoxy-D-xylulose 5-phosphate site.

Belongs to the ThiG family. As to quaternary structure, homotetramer. Forms heterodimers with either ThiH or ThiS.

It localises to the cytoplasm. It catalyses the reaction [ThiS sulfur-carrier protein]-C-terminal-Gly-aminoethanethioate + 2-iminoacetate + 1-deoxy-D-xylulose 5-phosphate = [ThiS sulfur-carrier protein]-C-terminal Gly-Gly + 2-[(2R,5Z)-2-carboxy-4-methylthiazol-5(2H)-ylidene]ethyl phosphate + 2 H2O + H(+). It participates in cofactor biosynthesis; thiamine diphosphate biosynthesis. Its function is as follows. Catalyzes the rearrangement of 1-deoxy-D-xylulose 5-phosphate (DXP) to produce the thiazole phosphate moiety of thiamine. Sulfur is provided by the thiocarboxylate moiety of the carrier protein ThiS. In vitro, sulfur can be provided by H(2)S. The sequence is that of Thiazole synthase from Shewanella oneidensis (strain ATCC 700550 / JCM 31522 / CIP 106686 / LMG 19005 / NCIMB 14063 / MR-1).